The following is a 279-amino-acid chain: Probable endonuclease 4 (279 aa).

The Zn(2+) site is built by His-69, His-109, Glu-145, Asp-179, His-182, His-216, Asp-229, His-231, and Glu-261.

This sequence belongs to the AP endonuclease 2 family. Zn(2+) serves as cofactor.

It catalyses the reaction Endonucleolytic cleavage to 5'-phosphooligonucleotide end-products.. In terms of biological role, endonuclease IV plays a role in DNA repair. It cleaves phosphodiester bonds at apurinic or apyrimidinic (AP) sites, generating a 3'-hydroxyl group and a 5'-terminal sugar phosphate. The chain is Probable endonuclease 4 from Buchnera aphidicola subsp. Schizaphis graminum (strain Sg).